The following is a 245-amino-acid chain: Adenosylcobinamide-GDP ribazoletransferase (245 aa).

6 helical membrane passes run 35–55, 108–128, 137–157, 176–196, 197–217, and 222–242; these read WFPL…ALGL, IGAF…IGAH, GVLI…AALV, IAIG…TPVM, TTVT…HLAR, and INGD…LLAA.

This sequence belongs to the CobS family. Mg(2+) is required as a cofactor.

The protein localises to the cell inner membrane. It carries out the reaction alpha-ribazole + adenosylcob(III)inamide-GDP = adenosylcob(III)alamin + GMP + H(+). It catalyses the reaction alpha-ribazole 5'-phosphate + adenosylcob(III)inamide-GDP = adenosylcob(III)alamin 5'-phosphate + GMP + H(+). It functions in the pathway cofactor biosynthesis; adenosylcobalamin biosynthesis; adenosylcobalamin from cob(II)yrinate a,c-diamide: step 7/7. Functionally, joins adenosylcobinamide-GDP and alpha-ribazole to generate adenosylcobalamin (Ado-cobalamin). Also synthesizes adenosylcobalamin 5'-phosphate from adenosylcobinamide-GDP and alpha-ribazole 5'-phosphate. This chain is Adenosylcobinamide-GDP ribazoletransferase, found in Nitratidesulfovibrio vulgaris (strain DP4) (Desulfovibrio vulgaris).